A 204-amino-acid chain; its full sequence is MIIYEESASDYYNKNDRLLYGIIEIAESTIVTGSNIISDLENQGSQLQSIHYNLEHIDSDIQIANDKMDHVESCLPSVRKTARKSFKKISKKLFKKKLVSKNSRLDSGVQNSEIQNNSKIQNNSEIQDNFANNFLDNPPDNSRHFSEDNIEKLHNIVCVLEKQANDISNILDEQNNTLEIIHNKIISDEIAIKKITRRIKHTQS.

T-SNARE coiled-coil homology domains are found at residues 9-71 (SDYY…MDHV) and 140-202 (DNSR…IKHT). Positions 159–181 (VLEKQANDISNILDEQNNTLEII) form a coiled coil.

The sequence is that of Putative t-SNARE coiled-coil homology domain-containing protein L657 from Acanthamoeba polyphaga (Amoeba).